The primary structure comprises 127 residues: Large ribosomal subunit protein bL17 (127 aa).

It belongs to the bacterial ribosomal protein bL17 family. In terms of assembly, part of the 50S ribosomal subunit. Contacts protein L32.

This Stenotrophomonas maltophilia (strain R551-3) protein is Large ribosomal subunit protein bL17.